The sequence spans 357 residues: Chorismate synthase (357 aa).

The NADP(+) site is built by Arg-48 and Arg-54. FMN is bound by residues 125 to 127 (RSS), 238 to 239 (NA), Gly-278, 293 to 297 (KPTSS), and Arg-319.

This sequence belongs to the chorismate synthase family. Homotetramer. It depends on FMNH2 as a cofactor.

The enzyme catalyses 5-O-(1-carboxyvinyl)-3-phosphoshikimate = chorismate + phosphate. Its pathway is metabolic intermediate biosynthesis; chorismate biosynthesis; chorismate from D-erythrose 4-phosphate and phosphoenolpyruvate: step 7/7. Functionally, catalyzes the anti-1,4-elimination of the C-3 phosphate and the C-6 proR hydrogen from 5-enolpyruvylshikimate-3-phosphate (EPSP) to yield chorismate, which is the branch point compound that serves as the starting substrate for the three terminal pathways of aromatic amino acid biosynthesis. This reaction introduces a second double bond into the aromatic ring system. This Blochmanniella floridana protein is Chorismate synthase.